The primary structure comprises 468 residues: MDMMKFAPEPFKIKMVEPMGNLNKEERKDAIRTAGYNTFLLKSEECFIDLLTDSGTNAMSDRQWAGLMLGDEAYGGSRNFYHLEETVRELFGFKYVVPTHQGRGAENILSSLTIKPGDYVPGNMYFTTTRFHQEHNGATFRDVVIDEAHDPNAILDFKGNIDLNKFQALIDEVGAERIPYICLAVTVNLAGGQPVSMANVKAVSELAHKHGIKVMFDATRCVENAYFIKTREKGYEDKSIKEIVHELFSYGDGCTMSGKKDCLTNIGGFLCMNDKDLYIRATGMVVQYEGMPTYGGMAGRDMEAMAIGLRESMEYNYISHRVNQIRYLGEKLDAAGVPMVKPSGGHAIFVDARAFLDHLDQKTDFPAQALAAAVYEFSGVRTMERGIISAGRDIKTGEDHVPKLETIRLTIPRRVYTYAHLDYVADAIIQLYQMRRDISGLKWVYEPAVLRFFTGRFEPKNGELIKGF.

Residue K260 is modified to N6-(pyridoxal phosphate)lysine.

This sequence belongs to the beta-eliminating lyase family. Homotetramer. Pyridoxal 5'-phosphate is required as a cofactor.

The catalysed reaction is L-tyrosine + H2O = phenol + pyruvate + NH4(+). This is Tyrosine phenol-lyase from Lacrimispora saccharolytica (strain ATCC 35040 / DSM 2544 / NRCC 2533 / WM1) (Clostridium saccharolyticum).